A 550-amino-acid polypeptide reads, in one-letter code: Acetyl-coenzyme A transporter 1 (550 aa).

Composition is skewed to basic and acidic residues over residues 1-12 and 36-52; these read MSPTISHKDSSR and DDSR…REVL. The segment at 1 to 58 is disordered; it reads MSPTISHKDSSRQRRSGMFSHALDMKSGPLPPGGWDDSRRDSVGGEGDREVLLGDAGP. Over 1–74 the chain is Cytoplasmic; that stretch reads MSPTISHKDS…PRSYRSELSS (74 aa). Phosphoserine is present on Ser42. Residues 75–95 traverse the membrane as a helical segment; it reads ILLLLFLYVLQGIPLGLAGSI. Topologically, residues 96–113 are extracellular; the sequence is PLILQSKNVSYTDQAFFS. N-linked (GlcNAc...) asparagine glycosylation is present at Asn103. Residues 114–134 form a helical membrane-spanning segment; that stretch reads FVFWPFSLKLLWAPLVDAVYF. Topologically, residues 135–141 are cytoplasmic; it reads KNFGRRK. The chain crosses the membrane as a helical span at residues 142–162; it reads SWLVPTQYTLGIFMIYLSTQV. Over 163-175 the chain is Extracellular; it reads DRLLGNIDGRTPD. Residues 176–196 form a helical membrane-spanning segment; it reads VVALTVTFFLFEFLAATQDIA. Topologically, residues 197–217 are cytoplasmic; sequence VDGWALTMLSRENVGYASTCN. A helical transmembrane segment spans residues 218–238; the sequence is SVGQTAGYFLGNVLFLALESA. Over 239 to 256 the chain is Extracellular; the sequence is DFCNKYLRFQPQPRGIVT. Residues 257–277 form a helical membrane-spanning segment; that stretch reads LSDFLFFWGTVFLITTTLVAL. Over 278 to 300 the chain is Cytoplasmic; sequence LKKENREASIVKEETQGITDTYK. A helical membrane pass occupies residues 301 to 321; sequence LLFSIIKMPAVLAFCLLILTS. At 322–344 the chain is on the extracellular side; the sequence is KIGFSAADAVTGLKLVEEGVPKE. A helical transmembrane segment spans residues 345–365; it reads HLALLAVPMVPLQIILPLLIS. Residues 366–375 are Cytoplasmic-facing; the sequence is KYTAGPQPLN. Residues 376-396 form a helical membrane-spanning segment; it reads IFYKAMPYRLLLGLEYALLVW. At 397–405 the chain is on the extracellular side; that stretch reads WTPKVEHQG. A helical transmembrane segment spans residues 406 to 426; the sequence is GFPLYYYIIVLLSYALHQVTL. At 427–509 the chain is on the cytoplasmic side; the sequence is YSMYVSIMAF…LGGSCVTALD (83 aa). Residues 510-530 traverse the membrane as a helical segment; that stretch reads GYYVESIICVLIGFGWWFFLG. At 531 to 550 the chain is on the extracellular side; sequence PKFKKLQDEGPSSWKCKRNN.

Belongs to the SLC33A transporter family. Homodimerizes. As to expression, expressed in all adult tissues examined including brain, heart, kidney, liver and spleen, with maximum expression in liver and kidney.

It localises to the endoplasmic reticulum membrane. It catalyses the reaction acetyl-CoA(in) = acetyl-CoA(out). Its function is as follows. Acetyl-CoA transporter that mediates active acetyl-CoA import through the endoplasmic reticulum (ER) membrane into the ER lumen where specific ER-based acetyl-CoA:lysine acetyltransferases are responsible for the acetylation of ER-based protein substrate, such as BACE1. Necessary for O-acetylation of gangliosides. This is Acetyl-coenzyme A transporter 1 (Slc33a1) from Mus musculus (Mouse).